The primary structure comprises 178 residues: Ribonuclease M5 (178 aa).

One can recognise a Toprim domain in the interval 10-94 (DGVIVCEGKT…YVDMNARLKN (85 aa)). Glu16, Asp62, and Asp64 together coordinate Mg(2+).

It belongs to the ribonuclease M5 family. Requires Mg(2+) as cofactor.

The protein localises to the cytoplasm. The enzyme catalyses Endonucleolytic cleavage of RNA, removing 21 and 42 nucleotides, respectively, from the 5'- and 3'-termini of a 5S-rRNA precursor.. Required for correct processing of both the 5' and 3' ends of 5S rRNA precursor. Cleaves both sides of a double-stranded region yielding mature 5S rRNA in one step. This chain is Ribonuclease M5 (rnmV), found in Mycoplasma genitalium (strain ATCC 33530 / DSM 19775 / NCTC 10195 / G37) (Mycoplasmoides genitalium).